We begin with the raw amino-acid sequence, 240 residues long: Ribosomal RNA small subunit methyltransferase G (240 aa).

S-adenosyl-L-methionine is bound by residues Gly79, Phe84, 130–131 (AE), and Arg149.

Belongs to the methyltransferase superfamily. RNA methyltransferase RsmG family.

The protein resides in the cytoplasm. Its function is as follows. Specifically methylates the N7 position of a guanine in 16S rRNA. This chain is Ribosomal RNA small subunit methyltransferase G, found in Lactobacillus helveticus (strain DPC 4571).